Reading from the N-terminus, the 681-residue chain is Methionine--tRNA ligase (681 aa).

Positions 12–22 match the 'HIGH' region motif; sequence PYANGSIHLGH. Residues C143, C146, C156, and C159 each coordinate Zn(2+). A 'KMSKS' region motif is present at residues 327–331; the sequence is KMSKS. An ATP-binding site is contributed by K330. Residues 545 to 557 show a composition bias toward basic and acidic residues; the sequence is FEKSNPEKAKQDP. The interval 545 to 566 is disordered; that stretch reads FEKSNPEKAKQDPSKSNTNEVK. The region spanning 580-681 is the tRNA-binding domain; sequence ELSKVELRVG…RDASPGDLLK (102 aa).

It belongs to the class-I aminoacyl-tRNA synthetase family. MetG type 1 subfamily. As to quaternary structure, homodimer. It depends on Zn(2+) as a cofactor.

It is found in the cytoplasm. It catalyses the reaction tRNA(Met) + L-methionine + ATP = L-methionyl-tRNA(Met) + AMP + diphosphate. Its function is as follows. Is required not only for elongation of protein synthesis but also for the initiation of all mRNA translation through initiator tRNA(fMet) aminoacylation. This Leptospira biflexa serovar Patoc (strain Patoc 1 / ATCC 23582 / Paris) protein is Methionine--tRNA ligase.